Reading from the N-terminus, the 382-residue chain is Secreted triacylglycerol lipase LIP5 (382 aa).

An intrachain disulfide couples C40 to C211. N115 carries an N-linked (GlcNAc...) asparagine glycan. The active-site Nucleophile is the S124. N157 and N232 each carry an N-linked (GlcNAc...) asparagine glycan. Catalysis depends on residues D271 and H305. N346 carries an N-linked (GlcNAc...) asparagine glycan.

It belongs to the AB hydrolase superfamily. Lipase family. Class Lip subfamily.

It localises to the secreted. It catalyses the reaction a triacylglycerol + H2O = a diacylglycerol + a fatty acid + H(+). The catalysed reaction is a monoacylglycerol + H2O = glycerol + a fatty acid + H(+). It carries out the reaction a diacylglycerol + H2O = a monoacylglycerol + a fatty acid + H(+). Secreted lipase that hydrolyzes acylglycerol lipids such as triacylglycerols and consequently releases free fatty acid. Can hydrolyze 4-nitrophenyl palmitate to release 4-nitrophenol and palmitoic acid. Due to an absence of fatty acid synthase genes in Malassezia species, secretory lipases are essential for the yeast to generate free fatty acids from degradation of sebum and assimilate them as lipid sources for growth. Plays important roles not only in lipid metabolism but also in the immune response of host cells and pathogenesis. The protein is Secreted triacylglycerol lipase LIP5 of Malassezia furfur (Pityriasis versicolor infection agent).